We begin with the raw amino-acid sequence, 29 residues long: Trypsin inhibitor 1 (29 aa).

Disulfide bonds link Cys3/Cys20, Cys10/Cys22, and Cys16/Cys28.

The protein belongs to the protease inhibitor I7 (squash-type serine protease inhibitor) family.

It is found in the secreted. Functionally, inhibits trypsin. The polypeptide is Trypsin inhibitor 1 (Momordica repens).